The sequence spans 71 residues: Putative membrane protein insertion efficiency factor (71 aa).

This sequence belongs to the UPF0161 family.

The protein resides in the cell membrane. In terms of biological role, could be involved in insertion of integral membrane proteins into the membrane. The chain is Putative membrane protein insertion efficiency factor from Acetivibrio thermocellus (strain ATCC 27405 / DSM 1237 / JCM 9322 / NBRC 103400 / NCIMB 10682 / NRRL B-4536 / VPI 7372) (Clostridium thermocellum).